The sequence spans 1445 residues: 3'-5' RNA helicase YTHDC2 (1445 aa).

A disordered region spans residues 1–50; it reads MSRPSSVSPRPPAPSGGGTGGGGGGSGGGGGGGGGGPASCGPGGGGRAKG. The span at 15-48 shows a compositional bias: gly residues; that stretch reads SGGGTGGGGGGSGGGGGGGGGGPASCGPGGGGRA. The R3H domain occupies 53-121; the sequence is DIRIDEEVKI…NRYLTVKKKD (69 aa). The Helicase ATP-binding domain occupies 218 to 384; it reads VKIIKENKVV…FGSCPVIYIQ (167 aa). An ATP-binding site is contributed by 231–238; the sequence is GETGSGKT. Positions 331–334 match the DEAH box motif; it reads DEVH. ANK repeat units lie at residues 521-553 and 554-586; these read TSATALMVAAGRGFTSQVEQLISMGANVHSKAS and NGWMALDWAKHFGQTEIVDLLESYSASLEFGNL. The 173-residue stretch at 627-799 folds into the Helicase C-terminal domain; the sequence is LLYNICHSCD…ELCLHTKLLA (173 aa). Phosphoserine is present on residues Ser1104, Ser1105, and Ser1107. Polar residues predominate over residues 1179-1189; it reads EQSAGLQQPSG. Positions 1179–1303 are disordered; sequence EQSAGLQQPS…SPSPRPNMPI (125 aa). Residues 1246–1264 show a composition bias toward basic and acidic residues; it reads KYKDRGILHPKRSTDDRSD. Low complexity predominate over residues 1265–1279; it reads QSSVKSTDSSSYPSP. A phosphoserine mark is found at Ser1278, Ser1282, and Ser1296. One can recognise a YTH domain in the interval 1303–1433; it reads IRYFIMKSSN…QVGEQLLQLW (131 aa). RNA is bound by residues 1309–1311, Trp1325, and Trp1375; that span reads KSS.

It belongs to the DEAD box helicase family. DEAH subfamily. In terms of assembly, interacts with MEIOC; binds transcripts that regulate the mitotic cell cycle inhibiting progression into metaphase, thereby allowing meiotic prophase to proceed normally. Interacts (via ANK repeats) with XRN1. Interacts with ZCCHC4. Associates with the small ribosomal subunit. Interacts with RBM46. In terms of tissue distribution, present in male and female germ cells (at protein level). Highly expressed in testis. Not detected in spermatogonia next to the tubule wall but is strongly expressed in spermatocytes, suggesting that it is up-regulated in germ cells upon entry into meiosis (at protein level).

Its subcellular location is the cytoplasm. The protein localises to the perinuclear region. The catalysed reaction is ATP + H2O = ADP + phosphate + H(+). Its function is as follows. 3'-5' RNA helicase that plays a key role in the male and female germline by promoting transition from mitotic to meiotic divisions in stem cells. Specifically recognizes and binds N6-methyladenosine (m6A)-containing RNAs, a modification present at internal sites of mRNAs and some non-coding RNAs that plays a role in the efficiency of RNA processing and stability. Essential for ensuring a successful progression of the meiotic program in the germline by regulating the level of m6A-containing RNAs. Acts by binding and promoting degradation of m6A-containing mRNAs: the 3'-5' RNA helicase activity is required for this process and RNA degradation may be mediated by XRN1 exoribonuclease. Required for both spermatogenesis and oogenesis. This Mus musculus (Mouse) protein is 3'-5' RNA helicase YTHDC2.